We begin with the raw amino-acid sequence, 317 residues long: Retinol dehydrogenase 7 (317 aa).

An NADP(+)-binding site is contributed by 33-57; it reads FITGCDSGFGNLLARQLDRRGMRVL. Ser-164 contributes to the substrate binding site. Tyr-176 serves as the catalytic Proton acceptor.

The protein belongs to the short-chain dehydrogenases/reductases (SDR) family.

It is found in the microsome. Its subcellular location is the endoplasmic reticulum. It carries out the reaction all-trans-retinol--[retinol-binding protein] + NAD(+) = all-trans-retinal--[retinol-binding protein] + NADH + H(+). Its pathway is cofactor metabolism; retinol metabolism. Its function is as follows. Acts on retinol bound on cellular retinol-binding protein (CRBP). The sequence is that of Retinol dehydrogenase 7 from Rattus norvegicus (Rat).